Reading from the N-terminus, the 130-residue chain is Large ribosomal subunit protein bL12 (130 aa).

The protein belongs to the bacterial ribosomal protein bL12 family. As to quaternary structure, homodimer. Part of the ribosomal stalk of the 50S ribosomal subunit. Forms a multimeric L10(L12)X complex, where L10 forms an elongated spine to which 2 to 4 L12 dimers bind in a sequential fashion. Binds GTP-bound translation factors.

Functionally, forms part of the ribosomal stalk which helps the ribosome interact with GTP-bound translation factors. Is thus essential for accurate translation. This chain is Large ribosomal subunit protein bL12, found in Mycobacterium leprae (strain TN).